The chain runs to 341 residues: Glycerol-3-phosphate dehydrogenase [NAD(P)+] 1 (341 aa).

NADPH is bound by residues serine 17, tryptophan 18, arginine 37, and lysine 112. Residues lysine 112 and glycine 140 each coordinate sn-glycerol 3-phosphate. Alanine 144 contacts NADPH. Residues lysine 195, aspartate 248, serine 258, arginine 259, and asparagine 260 each contribute to the sn-glycerol 3-phosphate site. Residue lysine 195 is the Proton acceptor of the active site. Arginine 259 serves as a coordination point for NADPH. NADPH-binding residues include valine 283 and glutamate 285.

The protein belongs to the NAD-dependent glycerol-3-phosphate dehydrogenase family.

Its subcellular location is the cytoplasm. The enzyme catalyses sn-glycerol 3-phosphate + NAD(+) = dihydroxyacetone phosphate + NADH + H(+). The catalysed reaction is sn-glycerol 3-phosphate + NADP(+) = dihydroxyacetone phosphate + NADPH + H(+). The protein operates within membrane lipid metabolism; glycerophospholipid metabolism. Its function is as follows. Catalyzes the reduction of the glycolytic intermediate dihydroxyacetone phosphate (DHAP) to sn-glycerol 3-phosphate (G3P), the key precursor for phospholipid synthesis. The polypeptide is Glycerol-3-phosphate dehydrogenase [NAD(P)+] 1 (Mycobacterium bovis (strain ATCC BAA-935 / AF2122/97)).